Reading from the N-terminus, the 30-residue chain is Unknown protein from spot 365 of 2D-PAGE of etiolated coleoptile (30 aa).

The protein belongs to the zinc-containing alcohol dehydrogenase family.

The chain is Unknown protein from spot 365 of 2D-PAGE of etiolated coleoptile from Zea mays (Maize).